We begin with the raw amino-acid sequence, 258 residues long: Putative cysteine-rich repeat secretory protein 61 (258 aa).

The first 31 residues, methionine 1 to serine 31, serve as a signal peptide directing secretion. 2 consecutive Gnk2-homologous domains span residues tyrosine 38–phenylalanine 140 and aspartate 146–phenylalanine 253.

Belongs to the cysteine-rich repeat secretory protein family.

The protein localises to the secreted. This Arabidopsis thaliana (Mouse-ear cress) protein is Putative cysteine-rich repeat secretory protein 61 (CRRSP61).